A 366-amino-acid chain; its full sequence is Ribosomal RNA large subunit methyltransferase M (366 aa).

Residues Ser-188, 221–224 (CPGG), Asp-240, Asp-260, and Asp-277 contribute to the S-adenosyl-L-methionine site. The active-site Proton acceptor is the Lys-306.

The protein belongs to the class I-like SAM-binding methyltransferase superfamily. RNA methyltransferase RlmE family. RlmM subfamily. Monomer.

It localises to the cytoplasm. The catalysed reaction is cytidine(2498) in 23S rRNA + S-adenosyl-L-methionine = 2'-O-methylcytidine(2498) in 23S rRNA + S-adenosyl-L-homocysteine + H(+). In terms of biological role, catalyzes the 2'-O-methylation at nucleotide C2498 in 23S rRNA. This chain is Ribosomal RNA large subunit methyltransferase M, found in Klebsiella pneumoniae subsp. pneumoniae (strain ATCC 700721 / MGH 78578).